The sequence spans 347 residues: MEEQLIPIQWKDDALVLLDQTLLPNEVVYESFNTAEGVWDAIQVMKVRGAPAIGVSAAYGVYLGVKEFVESTEAEFIDEVKRVCAYLATSRPTAVNLFWALERMESVATDHTHLSITQLKDRLLEEAKEIHREDEEINRQIGEHALTLFHDGMGVLTHCNAGALATTKYGTATAPMYLAKEKGWDLKIYSDETRPRLQGSTLTALELQRAGIDVTVITDNMAAMVMSQGKIDAVIVGCDRVAANGDVANKIGTLGVSILAKYYNIPFYVAAPTPTIDLKTPTGKEIPIEERDASEVINRFGQYSAPKESKVYNPAFDVTPHENVTAIITEKGIVKAPFTENLKKLFQ.

Substrate is bound by residues 48 to 50 (RGA), Arg91, and Gln198. Asp239 functions as the Proton donor in the catalytic mechanism. A substrate-binding site is contributed by 249–250 (NK).

Belongs to the EIF-2B alpha/beta/delta subunits family. DrdI subfamily.

It carries out the reaction 5-deoxy-alpha-D-ribose 1-phosphate = 5-deoxy-D-ribulose 1-phosphate. The protein operates within carbohydrate degradation. Its function is as follows. Catalyzes the isomerization of 5-deoxy-alpha-D-ribose 1-phosphate to 5-deoxy-D-ribulose 1-phosphate, as part of a 5-deoxyribose salvage pathway that recycles this toxic radical SAM enzyme by-product to mainstream metabolites. This chain is 5-deoxyribose 1-phosphate isomerase, found in Bacillus thuringiensis (strain Al Hakam).